Consider the following 116-residue polypeptide: Large ribosomal subunit protein bL17 (116 aa).

The protein belongs to the bacterial ribosomal protein bL17 family. Part of the 50S ribosomal subunit. Contacts protein L32.

The protein is Large ribosomal subunit protein bL17 of Crocosphaera subtropica (strain ATCC 51142 / BH68) (Cyanothece sp. (strain ATCC 51142)).